Here is a 513-residue protein sequence, read N- to C-terminus: uncharacterized protein (513 aa).

Residues 1 to 16 (MPREHDSKYHRERDMR) show a composition bias toward basic and acidic residues. The disordered stretch occupies residues 1–21 (MPREHDSKYHRERDMRSGLQE).

This is an uncharacterized protein from Sinorhizobium fredii (strain NBRC 101917 / NGR234).